Here is a 177-residue protein sequence, read N- to C-terminus: MGVMTGSNTAAVDMDVAAAALNRDLQDKGFLLTTAEDIINWARNGSLHWMTFGLACCAVEMMHTAMPRYDVERYGFAPRASPRQSDVMIVAGTLTNKMAPALRKVYDQMPEPRYVISMGSCANGGGYYHYSYSVVRGCDRIVPVDIYVPGCPPSAEALMYGILQLQRKIRRTGTLVR.

[4Fe-4S] cluster is bound by residues Cys-56, Cys-57, Cys-121, and Cys-151.

It belongs to the complex I 20 kDa subunit family. NDH-1 is composed of 14 different subunits. Subunits NuoB, C, D, E, F, and G constitute the peripheral sector of the complex. [4Fe-4S] cluster is required as a cofactor.

The protein resides in the cell inner membrane. It catalyses the reaction a quinone + NADH + 5 H(+)(in) = a quinol + NAD(+) + 4 H(+)(out). Its function is as follows. NDH-1 shuttles electrons from NADH, via FMN and iron-sulfur (Fe-S) centers, to quinones in the respiratory chain. The immediate electron acceptor for the enzyme in this species is believed to be ubiquinone. Couples the redox reaction to proton translocation (for every two electrons transferred, four hydrogen ions are translocated across the cytoplasmic membrane), and thus conserves the redox energy in a proton gradient. This is NADH-quinone oxidoreductase subunit B from Rhodobacter capsulatus (Rhodopseudomonas capsulata).